We begin with the raw amino-acid sequence, 364 residues long: Phosphoserine aminotransferase (364 aa).

Arg46 contributes to the L-glutamate binding site. Pyridoxal 5'-phosphate-binding positions include 80–81, Trp106, Thr157, Asp176, and Gln199; that span reads AR. Lys200 bears the N6-(pyridoxal phosphate)lysine mark. 241 to 242 is a binding site for pyridoxal 5'-phosphate; sequence NT.

Belongs to the class-V pyridoxal-phosphate-dependent aminotransferase family. SerC subfamily. Homodimer. The cofactor is pyridoxal 5'-phosphate.

It localises to the cytoplasm. It carries out the reaction O-phospho-L-serine + 2-oxoglutarate = 3-phosphooxypyruvate + L-glutamate. It catalyses the reaction 4-(phosphooxy)-L-threonine + 2-oxoglutarate = (R)-3-hydroxy-2-oxo-4-phosphooxybutanoate + L-glutamate. It functions in the pathway amino-acid biosynthesis; L-serine biosynthesis; L-serine from 3-phospho-D-glycerate: step 2/3. The protein operates within cofactor biosynthesis; pyridoxine 5'-phosphate biosynthesis; pyridoxine 5'-phosphate from D-erythrose 4-phosphate: step 3/5. Catalyzes the reversible conversion of 3-phosphohydroxypyruvate to phosphoserine and of 3-hydroxy-2-oxo-4-phosphonooxybutanoate to phosphohydroxythreonine. The protein is Phosphoserine aminotransferase of Vibrio vulnificus (strain CMCP6).